We begin with the raw amino-acid sequence, 120 residues long: Cell division protein FtsL (120 aa).

The disordered stretch occupies residues 1-22 (MSNVAYKSNLEPNRVHREAEQP). The Cytoplasmic segment spans residues 1-37 (MSNVAYKSNLEPNRVHREAEQPKKQILKRGQMTLGEK). Positions 13-22 (NRVHREAEQP) are enriched in basic and acidic residues. A helical transmembrane segment spans residues 38–58 (VIITIALAIVLVVAFRIISVQ). Topologically, residues 59–120 (AQIYTVNQEI…GDNVKVVDGQ (62 aa)) are extracellular.

This sequence belongs to the FtsL family.

The protein resides in the cell membrane. Functionally, essential cell division protein. The chain is Cell division protein FtsL from Listeria monocytogenes serovar 1/2a (strain ATCC BAA-679 / EGD-e).